The chain runs to 25 residues: Aurein-5.1 (25 aa).

This sequence belongs to the frog skin active peptide (FSAP) family. Aurein subfamily. Expressed by the skin dorsal glands.

Its subcellular location is the secreted. Its function is as follows. Has no antimicrobial or anticancer activity. This is Aurein-5.1 from Ranoidea aurea (Green and golden bell frog).